Reading from the N-terminus, the 465-residue chain is Gamma-aminobutyric acid receptor subunit gamma-1 (465 aa).

An N-terminal signal peptide occupies residues 1-20 (MGSGKAFLFSPSLLWSQTRG). Over 21-273 (VRLIFLLLTL…FDLSRRMGYF (253 aa)) the chain is Extracellular. Asn-50 and Asn-127 each carry an N-linked (GlcNAc...) asparagine glycan. Cys-188 and Cys-202 are oxidised to a cystine. N-linked (GlcNAc...) asparagine glycosylation occurs at Asn-245. The chain crosses the membrane as a helical span at residues 274 to 294 (TIQTYIPCILTVVLSWVSFWI). The Cytoplasmic segment spans residues 295–300 (NKDAVP). The helical transmembrane segment at 301 to 320 (ARTSLGITTVLTMTTLSTIA) threads the bilayer. Over 321–328 (RKSLPKVS) the chain is Extracellular. Residues 329–349 (YVTAMDLFVSVCFIFVFAALM) traverse the membrane as a helical segment. Over 350–444 (EYGTLHYFTS…RIAKIDSYSR (95 aa)) the chain is Cytoplasmic. The chain crosses the membrane as a helical span at residues 445–465 (IFFPTAFALFNLVYWVGYLYL).

The protein belongs to the ligand-gated ion channel (TC 1.A.9) family. Gamma-aminobutyric acid receptor (TC 1.A.9.5) subfamily. GABRG1 sub-subfamily. Heteropentamer, formed by a combination of alpha (GABRA1-6), beta (GABRB1-3), gamma (GABRG1-3), delta (GABRD), epsilon (GABRE), rho (GABRR1-3), pi (GABRP) and theta (GABRQ) chains, each subunit exhibiting distinct physiological and pharmacological properties. May be palmitoylated. In terms of tissue distribution, expressed in brain.

The protein localises to the postsynaptic cell membrane. Its subcellular location is the cell membrane. It catalyses the reaction chloride(in) = chloride(out). Its function is as follows. Gamma subunit of the heteropentameric ligand-gated chloride channel gated by gamma-aminobutyric acid (GABA), a major inhibitory neurotransmitter in the brain. GABA-gated chloride channels, also named GABA(A) receptors (GABAAR), consist of five subunits arranged around a central pore and contain GABA active binding site(s) located at the alpha and beta subunit interface(s). When activated by GABA, GABAARs selectively allow the flow of chloride anions across the cell membrane down their electrochemical gradient. Chloride influx into the postsynaptic neuron following GABAAR opening decreases the neuron ability to generate a new action potential, thereby reducing nerve transmission. In Mus musculus (Mouse), this protein is Gamma-aminobutyric acid receptor subunit gamma-1.